Consider the following 88-residue polypeptide: MFENIDKGTIVRTLLLAIALLNQIMVMLGKAAFIINEEDINHLYDCLYTIFTIVFTTSTTTAAWFKNNYITAKGKKQKQVLKKENLFK.

A run of 2 helical transmembrane segments spans residues 15–35 (LLAI…AFII) and 45–65 (DCLY…AAWF).

Belongs to the SPP1 holin family.

It localises to the cell membrane. In terms of biological role, may be involved in the secretion of the autolysin BlyA. The sequence is that of SPbeta prophage-derived protein BhlB (bhlB) from Bacillus subtilis (strain 168).